The following is a 249-amino-acid chain: Probable septum site-determining protein MinC (249 aa).

The disordered stretch occupies residues 115–144; the sequence is PTAVSPPPPPPPPPARAEPAPPAARPAPGR. Residues 118-139 are compositionally biased toward pro residues; sequence VSPPPPPPPPPARAEPAPPAAR.

The protein belongs to the MinC family. Interacts with MinD and FtsZ.

In terms of biological role, cell division inhibitor that blocks the formation of polar Z ring septums. Rapidly oscillates between the poles of the cell to destabilize FtsZ filaments that have formed before they mature into polar Z rings. Prevents FtsZ polymerization. The polypeptide is Probable septum site-determining protein MinC (Xanthomonas axonopodis pv. citri (strain 306)).